Consider the following 2102-residue polypeptide: Mediator of RNA polymerase II transcription subunit 13-like (2102 aa).

Disordered regions lie at residues 304–335, 432–487, 514–587, 689–758, 776–819, and 947–1034; these read SYAG…EEAQ, QRAC…QPSL, VTSS…LDPL, SSAV…TTSL, NSDE…DLHQ, and SVVE…SSVE. Residues 439 to 450 show a composition bias toward pro residues; sequence GHPPSAGQPPQP. Residues 455-467 are compositionally biased toward basic and acidic residues; the sequence is KMAEKLEKGDKQQ. Over residues 693-714 the composition is skewed to acidic residues; sequence CDEDPEQESDPYAFEEGDEEFN. Basic and acidic residues-rich tracts occupy residues 715-737 and 794-804; these read FSDK…REDG and AEEKFGGKEPK. A compositionally biased stretch (polar residues) spans 947–974; sequence SVVEQEQSCTPQTHNTFMSNSAPPSNSG. Over residues 979–990 the composition is skewed to low complexity; that stretch reads PSPATPRISAPT. Residues 1015-1029 are compositionally biased toward polar residues; sequence SDLNSPASTPSTCRP. Short sequence motifs (LXXLL motif) lie at residues 1165–1169 and 1254–1258; these read LMLLL and LRMLL. Disordered regions lie at residues 1451–1574 and 1948–1983; these read LTQR…DGDS and NSPT…HDES. 3 stretches are compositionally biased toward low complexity: residues 1458–1467, 1476–1502, and 1522–1538; these read SSSQTSSSSS, TPTT…SSSS, and GAQG…QSAG. Positions 1542-1552 are enriched in polar residues; it reads DATSATSQPQV. Residues 1973–1983 are compositionally biased toward basic and acidic residues; it reads GTDRMESHDES.

It belongs to the Mediator complex subunit 13 family. Component of the Mediator complex.

The protein localises to the nucleus. Component of the Mediator complex, a coactivator involved in regulated gene transcription of nearly all RNA polymerase II-dependent genes. Mediator functions as a bridge to convey information from gene-specific regulatory proteins to the basal RNA polymerase II transcription machinery. Mediator is recruited to promoters by direct interactions with regulatory proteins and serves as a scaffold for the assembly of a functional preinitiation complex with RNA polymerase II and the general transcription factors. The chain is Mediator of RNA polymerase II transcription subunit 13-like from Danio rerio (Zebrafish).